Here is a 188-residue protein sequence, read N- to C-terminus: Large ribosomal subunit protein eL18 (188 aa).

Lys-119 participates in a covalent cross-link: Glycyl lysine isopeptide (Lys-Gly) (interchain with G-Cter in SUMO2). Position 130 is a phosphoserine (Ser-130). The segment at 150–188 (RHFGKAPGTPHSHTKPYVRSKGRKFERARGRRASRGYKN) is disordered. Thr-158 bears the Phosphothreonine mark. 2 stretches are compositionally biased toward basic residues: residues 161-171 (SHTKPYVRSKG) and 178-188 (RGRRASRGYKN). A Glycyl lysine isopeptide (Lys-Gly) (interchain with G-Cter in SUMO2) cross-link involves residue Lys-164.

Belongs to the eukaryotic ribosomal protein eL18 family. In terms of assembly, component of the large ribosomal subunit.

Its subcellular location is the cytoplasm. It is found in the cytosol. The protein localises to the rough endoplasmic reticulum. Its function is as follows. Component of the large ribosomal subunit. The ribosome is a large ribonucleoprotein complex responsible for the synthesis of proteins in the cell. The sequence is that of Large ribosomal subunit protein eL18 (Rpl18) from Mus musculus (Mouse).